The sequence spans 383 residues: Homoserine O-acetyltransferase (383 aa).

Positions 52-362 (NAILVCHALT…PWGHDAFLLD (311 aa)) constitute an AB hydrolase-1 domain. Ser158 serves as the catalytic Nucleophile. Residue Arg227 coordinates substrate. Catalysis depends on residues Asp323 and His356. Residue Asp357 coordinates substrate.

The protein belongs to the AB hydrolase superfamily. MetX family. In terms of assembly, homodimer.

The protein localises to the cytoplasm. It catalyses the reaction L-homoserine + acetyl-CoA = O-acetyl-L-homoserine + CoA. Its pathway is amino-acid biosynthesis; L-methionine biosynthesis via de novo pathway; O-acetyl-L-homoserine from L-homoserine: step 1/1. In terms of biological role, transfers an acetyl group from acetyl-CoA to L-homoserine, forming acetyl-L-homoserine. The polypeptide is Homoserine O-acetyltransferase (Symbiobacterium thermophilum (strain DSM 24528 / JCM 14929 / IAM 14863 / T)).